We begin with the raw amino-acid sequence, 173 residues long: Alpha-crystallin A chain (173 aa).

Met-1 bears the N-acetylmethionine mark. The tract at residues 1 to 63 (MDIAIQHPWF…RSVLDSGISE (63 aa)) is required for complex formation with BFSP1 and BFSP2. At Gln-6 the chain carries Deamidated glutamine; partial. Position 45 is a phosphoserine (Ser-45). Residue Gln-50 is modified to Deamidated glutamine; partial. In terms of domain architecture, sHSP spans 52–162 (VFRSVLDSGI…GHSERAIPVS (111 aa)). N6-acetyllysine occurs at positions 70 and 99. His-100 contacts Zn(2+). Asn-101 carries the deamidated asparagine; partial modification. Glu-102 and His-107 together coordinate Zn(2+). Ser-122 carries the phosphoserine modification. A Deamidated asparagine; partial modification is found at Asn-123. Residues 144–173 (PKVPSGVDAGHSERAIPVSREEKPSSAPSS) are disordered. A compositionally biased stretch (basic and acidic residues) spans 153–167 (GHSERAIPVSREEKP). Residue His-154 participates in Zn(2+) binding. A glycan (O-linked (GlcNAc) serine) is linked at Ser-162.

This sequence belongs to the small heat shock protein (HSP20) family. As to quaternary structure, heteromer composed of three CRYAA and one CRYAB subunits. Inter-subunit bridging via zinc ions enhances stability, which is crucial as there is no protein turn over in the lens. Can also form homodimers and homotetramers (dimers of dimers) which serve as the building blocks of homooligomers. Within homooligomers, the zinc-binding motif is created from residues of 3 different molecules. His-100 and Glu-102 from one molecule are ligands of the zinc ion, and His-107 and His-154 residues from additional molecules complete the site with tetrahedral coordination geometry. Part of a complex required for lens intermediate filament formation composed of BFSP1, BFSP2 and CRYAA. Post-translationally, acetylation at Lys-70 may increase chaperone activity. In terms of processing, undergoes age-dependent proteolytical cleavage at the C-terminus.

The protein localises to the cytoplasm. It is found in the nucleus. Its function is as follows. Contributes to the transparency and refractive index of the lens. Acts as a chaperone, preventing aggregation of various proteins under a wide range of stress conditions. Required for the correct formation of lens intermediate filaments as part of a complex composed of BFSP1, BFSP2 and CRYAA. The polypeptide is Alpha-crystallin A chain (CRYAA) (Halichoerus grypus (Gray seal)).